A 540-amino-acid polypeptide reads, in one-letter code: Growth factor receptor-bound protein 14 (540 aa).

Residue T2 is modified to N-acetylthreonine. The residue at position 9 (Q9) is a Phosphothreonine. One can recognise a Ras-associating domain in the interval 106–192 (KKQVIKVYSE…NKLYFRKNYA (87 aa)). The PH domain occupies 234-342 (YPEIHGFLHA…WVTAIRLLKY (109 aa)). A phosphoserine mark is found at S372 and S375. Residues 439–535 (WFHHKISRDE…VLPCKLKHYC (97 aa)) enclose the SH2 domain.

The protein belongs to the GRB7/10/14 family. Interacts with the cytoplasmic domain of the autophosphorylated insulin receptor (INSR), through the SH2 domain. Interacts with GRB14 (via BPS domain); this interaction protects the tyrosines in the activation loop on INSR from dephosphorylation. Binds to the ankyrin repeat region of TNKS2 via its N-terminus. Interacts with activated NRAS. Interacts (via SH2 domain) with TEK/TIE2 (tyrosine phosphorylated). Post-translationally, phosphorylated on serine residues. Phosphorylated on tyrosine residues by TEK/TIE2. Expressed at high levels in the liver, kidney, pancreas, testis, ovary, heart and skeletal muscle.

The protein resides in the cytoplasm. The protein localises to the endosome membrane. Its function is as follows. Adapter protein which modulates coupling of cell surface receptor kinases with specific signaling pathways. Binds to, and suppresses signals from, the activated insulin receptor (INSR). Potent inhibitor of insulin-stimulated MAPK3 phosphorylation. Plays a critical role regulating PDPK1 membrane translocation in response to insulin stimulation and serves as an adapter protein to recruit PDPK1 to activated insulin receptor, thus promoting PKB/AKT1 phosphorylation and transduction of the insulin signal. In Homo sapiens (Human), this protein is Growth factor receptor-bound protein 14 (GRB14).